The following is a 134-amino-acid chain: Replication enhancer protein (134 aa).

The protein belongs to the geminiviridae replication enhancer protein family. Homooligomer. Interacts with the replication-associated protein (REP). Interacts with host proliferating cell nuclear antigen (PCNA). Interacts with host retinoblastoma-related protein 1 (RBR1), and may thereby deregulate the host cell cycle. Oligomerization and interaction with PCNA are necessary for optimal replication enhancement.

Its function is as follows. Increases viral DNA accumulation. Enhances infectivity and symptom expression. This chain is Replication enhancer protein, found in Squash leaf curl virus (SLCV).